Reading from the N-terminus, the 298-residue chain is Ribosomal protein uL3 glutamine methyltransferase (298 aa).

Belongs to the protein N5-glutamine methyltransferase family. PrmB subfamily.

The catalysed reaction is L-glutaminyl-[ribosomal protein uL3] + S-adenosyl-L-methionine = N(5)-methyl-L-glutaminyl-[ribosomal protein uL3] + S-adenosyl-L-homocysteine + H(+). Functionally, methylates large ribosomal subunit protein uL3 on a specific glutamine residue. The polypeptide is Ribosomal protein uL3 glutamine methyltransferase (Bordetella pertussis (strain Tohama I / ATCC BAA-589 / NCTC 13251)).